Consider the following 597-residue polypeptide: Arginine--tRNA ligase (597 aa).

The 'HIGH' region signature appears at 137-147 (PNIAKEMHVGH).

Belongs to the class-I aminoacyl-tRNA synthetase family. As to quaternary structure, monomer.

It localises to the cytoplasm. It catalyses the reaction tRNA(Arg) + L-arginine + ATP = L-arginyl-tRNA(Arg) + AMP + diphosphate. This Parasynechococcus marenigrum (strain WH8102) protein is Arginine--tRNA ligase.